Here is a 279-residue protein sequence, read N- to C-terminus: NH(3)-dependent NAD(+) synthetase (279 aa).

46–53 (GISGGQDS) serves as a coordination point for ATP. Residue aspartate 52 coordinates Mg(2+). Deamido-NAD(+) is bound at residue arginine 145. Position 165 (threonine 165) interacts with ATP. Position 170 (glutamate 170) interacts with Mg(2+). 2 residues coordinate deamido-NAD(+): lysine 178 and aspartate 185. ATP is bound by residues lysine 194 and threonine 216. Residue 265–266 (HK) participates in deamido-NAD(+) binding.

This sequence belongs to the NAD synthetase family. In terms of assembly, homodimer.

It carries out the reaction deamido-NAD(+) + NH4(+) + ATP = AMP + diphosphate + NAD(+) + H(+). Its pathway is cofactor biosynthesis; NAD(+) biosynthesis; NAD(+) from deamido-NAD(+) (ammonia route): step 1/1. Its function is as follows. Catalyzes the ATP-dependent amidation of deamido-NAD to form NAD. Uses ammonia as a nitrogen source. The chain is NH(3)-dependent NAD(+) synthetase from Rhodococcus jostii (strain RHA1).